Reading from the N-terminus, the 267-residue chain is Indole-3-glycerol phosphate synthase (267 aa).

This sequence belongs to the TrpC family.

It carries out the reaction 1-(2-carboxyphenylamino)-1-deoxy-D-ribulose 5-phosphate + H(+) = (1S,2R)-1-C-(indol-3-yl)glycerol 3-phosphate + CO2 + H2O. It functions in the pathway amino-acid biosynthesis; L-tryptophan biosynthesis; L-tryptophan from chorismate: step 4/5. This chain is Indole-3-glycerol phosphate synthase, found in Ralstonia pickettii (strain 12J).